Consider the following 274-residue polypeptide: D-aminopeptidase (274 aa).

Zn(2+) is bound by residues D8, E10, H60, and H104. Residue H115 is the Nucleophile of the active site. A Zn(2+)-binding site is contributed by E133.

This sequence belongs to the peptidase M55 family. As to quaternary structure, homodecamer. A 20 Angstroms wide channel runs through the complex, giving access to a central chamber holding the active sites. Requires Zn(2+) as cofactor.

Its function is as follows. Hydrolyzes N-terminal residues in D-amino acid containing peptides. Among the tested substrates, the highest activities are with D-Ala-D-Ala and D-Ala-Gly-Gly. The physiological role is not clear. The polypeptide is D-aminopeptidase (dppA) (Bacillus subtilis (strain 168)).